Here is a 95-residue protein sequence, read N- to C-terminus: Parvalbumin beta 3 (95 aa).

Position 1 is an N-acetylalanine (Ala-1). EF-hand domains are found at residues 39-66 (FFAI…FSAG) and 77-95 (DVDG…LVKA). Ca(2+) contacts are provided by Asp-44, Asp-46, Ser-48, Phe-50, Glu-52, Glu-55, Asp-77, Asp-79, Asp-81, Met-83, and Glu-88.

The protein belongs to the parvalbumin family.

In muscle, parvalbumin is thought to be involved in relaxation after contraction. It binds two calcium ions. The chain is Parvalbumin beta 3 from Merluccius paradoxus (Deep-water Cape hake).